Here is a 172-residue protein sequence, read N- to C-terminus: Adenine phosphoribosyltransferase (172 aa).

The protein belongs to the purine/pyrimidine phosphoribosyltransferase family. As to quaternary structure, homodimer.

The protein resides in the cytoplasm. It carries out the reaction AMP + diphosphate = 5-phospho-alpha-D-ribose 1-diphosphate + adenine. The protein operates within purine metabolism; AMP biosynthesis via salvage pathway; AMP from adenine: step 1/1. Catalyzes a salvage reaction resulting in the formation of AMP, that is energically less costly than de novo synthesis. This is Adenine phosphoribosyltransferase from Prochlorococcus marinus (strain NATL1A).